The sequence spans 639 residues: 1-deoxy-D-xylulose-5-phosphate synthase (639 aa).

Thiamine diphosphate-binding positions include H79 and 120-122; that span reads AHS. Residue D151 coordinates Mg(2+). Thiamine diphosphate is bound by residues 152-153, N180, Y289, and E371; that span reads GA. N180 serves as a coordination point for Mg(2+).

This sequence belongs to the transketolase family. DXPS subfamily. As to quaternary structure, homodimer. Mg(2+) serves as cofactor. Requires thiamine diphosphate as cofactor.

The enzyme catalyses D-glyceraldehyde 3-phosphate + pyruvate + H(+) = 1-deoxy-D-xylulose 5-phosphate + CO2. Its pathway is metabolic intermediate biosynthesis; 1-deoxy-D-xylulose 5-phosphate biosynthesis; 1-deoxy-D-xylulose 5-phosphate from D-glyceraldehyde 3-phosphate and pyruvate: step 1/1. Catalyzes the acyloin condensation reaction between C atoms 2 and 3 of pyruvate and glyceraldehyde 3-phosphate to yield 1-deoxy-D-xylulose-5-phosphate (DXP). This is 1-deoxy-D-xylulose-5-phosphate synthase from Rhizorhabdus wittichii (strain DSM 6014 / CCUG 31198 / JCM 15750 / NBRC 105917 / EY 4224 / RW1) (Sphingomonas wittichii).